The following is a 102-amino-acid chain: RNA-binding protein Hfq (102 aa).

One can recognise a Sm domain in the interval 9–68 (DPFVNALRRERVPVSIYLVNGIKLQGQIESFDQFVILLKNTVSQMVYKHAISTVVPSRPV). The tract at residues 63–102 (VPSRPVSHHSNNAGGGASNNYHHGSNAQGSTAQQDSEETE) is disordered. The span at 70–88 (HHSNNAGGGASNNYHHGSN) shows a compositional bias: low complexity.

It belongs to the Hfq family. Homohexamer.

Its function is as follows. RNA chaperone that binds small regulatory RNA (sRNAs) and mRNAs to facilitate mRNA translational regulation in response to envelope stress, environmental stress and changes in metabolite concentrations. Also binds with high specificity to tRNAs. This Salmonella heidelberg (strain SL476) protein is RNA-binding protein Hfq.